The following is a 306-amino-acid chain: Arylesterase (306 aa).

The Involved in the stabilization of the negatively charged intermediate by the formation of the oxyanion hole motif lies at 82 to 84 (HGG). Active-site residues include S156, D251, and H281.

Monomer.

It catalyses the reaction a phenyl acetate + H2O = a phenol + acetate + H(+). The enzyme catalyses An aryl dialkyl phosphate + H2O = dialkyl phosphate + an aryl alcohol.. Its activity is regulated as follows. Completely inhibited by chemical modifiers that are specific to Cys (HgCl(2) and p-chloromercuribenzoic acid), His (diethyl pyrocarbonate) and Ser (diisopropyl fluorophosphate and phenylmethanesulfonyl fluoride). No significant effect with chemical modifiers specific to Lys (pyridoxal 5'-phosphate) and Arg (phenylglyoxal). Not inhibited by inhibitors of A-esterases (paraoxon) or C-esterases (physostigmine/eserine). Activity is also not effected by incubation with 5 mM divalent cations for 30 minutes at 30 degrees Celsius or with 10 mM EDTA for 60 minutes at 75 degrees Celsius. Its function is as follows. Has a broad substrate specificity. Hydrolyzes various p-nitrophenyl phosphates, aromatic esters and p-nitrophenyl fatty acids in vitro. Most active against paraoxon, phenyl acetate and p-nitrophenyl caproate (C6), respectively. Also has tributyrinase activity, but shows no hydrolytic activity toward other triacylglycerols including tricaprylin, trimyristin, tripalmitin or triolein in vitro. This is Arylesterase from Saccharolobus solfataricus (Sulfolobus solfataricus).